Here is a 142-residue protein sequence, read N- to C-terminus: ER-derived vesicles protein ERV15 (142 aa).

At 1-7 (MSGTGLS) the chain is on the cytoplasmic side. The chain crosses the membrane as a helical span at residues 8 to 28 (LFVTGLILNCLNSICQIYFTI). At 29–55 (LYGDLEADYINSIELCKRVNRLSVPEA) the chain is on the extracellular side. The chain crosses the membrane as a helical span at residues 56 to 76 (ILQAFISALFLFNGYWFVFLL). Residues 77 to 114 (NVPVLAYNASKVYKKTHLLDATDIFRKLGRCKIECFLK) are Cytoplasmic-facing. A helical transmembrane segment spans residues 115–135 (LGFYLLIFFFYFYRMVTALLE). The Extracellular segment spans residues 136–142 (NDANLIS).

Belongs to the cornichon family.

The protein resides in the membrane. This Saccharomyces cerevisiae (strain ATCC 204508 / S288c) (Baker's yeast) protein is ER-derived vesicles protein ERV15 (ERV15).